A 434-amino-acid polypeptide reads, in one-letter code: Maltotriose-binding protein (434 aa).

Residues 1–20 (MRRATYAFALLAILVLGVVA) form the signal peptide. Residues 28–52 (TTTPTQTSPATQPTTTQTPTQTETQ) are disordered. Positions 29–52 (TTPTQTSPATQPTTTQTPTQTETQ) are enriched in low complexity.

Belongs to the bacterial solute-binding protein 1 family.

Its function is as follows. Involved in an abc transport system for maltotriose. Binds maltotriose much more tightly than maltose. In Pyrococcus furiosus (strain ATCC 43587 / DSM 3638 / JCM 8422 / Vc1), this protein is Maltotriose-binding protein (malE).